A 465-amino-acid chain; its full sequence is UDP-N-acetylmuramate--L-alanine ligase (465 aa).

112-118 contacts ATP; that stretch reads GTHGKTT.

It belongs to the MurCDEF family.

The protein resides in the cytoplasm. It catalyses the reaction UDP-N-acetyl-alpha-D-muramate + L-alanine + ATP = UDP-N-acetyl-alpha-D-muramoyl-L-alanine + ADP + phosphate + H(+). Its pathway is cell wall biogenesis; peptidoglycan biosynthesis. Its function is as follows. Cell wall formation. In Burkholderia lata (strain ATCC 17760 / DSM 23089 / LMG 22485 / NCIMB 9086 / R18194 / 383), this protein is UDP-N-acetylmuramate--L-alanine ligase.